The chain runs to 711 residues: BCLAF1 and THRAP3 family member 3 (711 aa).

Residues 1–15 are compositionally biased toward basic residues; it reads MARSRSRSPRWKHRS. Disordered stretches follow at residues 1-42 and 48-67; these read MARS…YRKD and AWRM…PSRG. Phosphoserine is present on residues Ser-15 and Ser-17. The span at 48-57 shows a compositional bias: basic and acidic residues; it reads AWRMDSEKHG. Phosphoserine occurs at positions 78, 80, and 187. Disordered regions lie at residues 94–350 and 371–404; these read KPHR…KDSI and EKIK…PSPI. 6 stretches are compositionally biased toward basic and acidic residues: residues 163–197, 204–213, 220–242, 296–311, 318–349, and 371–383; these read FRFE…DFET, RYPEDRDFRK, RPKD…KPEH, SDGR…DRKY, LNRE…KKDS, and EKIK…RKES. Lys-400 is covalently cross-linked (Glycyl lysine isopeptide (Lys-Gly) (interchain with G-Cter in SUMO2)). Phosphoserine occurs at positions 402 and 578.

It belongs to the BCLAF1/THRAP3 family.

The protein localises to the mitochondrion. The chain is BCLAF1 and THRAP3 family member 3 from Homo sapiens (Human).